Consider the following 324-residue polypeptide: Endochitinase 1 (324 aa).

Positions 1–22 (MSFLQALSIFLLLLLYVVVGSA) are cleaved as a signal peptide. Residues 23 to 64 (EQCGRQAGGALCPGGLCCSQFGWCGSTADYCTVPGCQSQCSG) enclose the Chitin-binding type-1 domain. Disulfide bonds link cysteine 25–cysteine 40, cysteine 34–cysteine 46, cysteine 39–cysteine 53, cysteine 58–cysteine 62, cysteine 95–cysteine 158, cysteine 170–cysteine 178, and cysteine 277–cysteine 309. The Proton donor role is filled by glutamate 139. A propeptide spans 318–324 (GVSVDSM) (removed in mature form).

This sequence belongs to the glycosyl hydrolase 19 family. Chitinase class I subfamily.

The catalysed reaction is Random endo-hydrolysis of N-acetyl-beta-D-glucosaminide (1-&gt;4)-beta-linkages in chitin and chitodextrins.. Defense against chitin-containing fungal pathogens. The polypeptide is Endochitinase 1 (Gossypium hirsutum (Upland cotton)).